The chain runs to 595 residues: Beta-(1--&gt;2)glucan export ATP-binding/permease protein NdvA (595 aa).

5 consecutive transmembrane segments (helical) span residues 21–41 (FLLI…EPIL), 56–76 (LVTL…YVLV), 129–149 (IWLE…VLVP), 158–178 (LSIV…LVMQ), and 252–272 (ISIV…QLSV). Residues 21 to 301 (FLLICTANIT…ISGFINLAVS (281 aa)) form the ABC transmembrane type-1 domain. One can recognise an ABC transporter domain in the interval 335-569 (IQFHHVTYEF…DGHFYKLLKR (235 aa)). 368–375 (GPTGAGKT) contributes to the ATP binding site.

This sequence belongs to the ABC transporter superfamily. Beta-(1--&gt;2)glucan exporter (TC 3.A.1.108.1) family. As to quaternary structure, homodimer.

Its subcellular location is the cell inner membrane. It catalyses the reaction [(1-&gt;2)-beta-D-glucosyl](n)(in) + ATP + H2O = [(1-&gt;2)-beta-D-glucosyl](n)(out) + ADP + phosphate + H(+). Its function is as follows. Involved in beta-(1--&gt;2)glucan export. Transmembrane domains (TMD) form a pore in the inner membrane and the ATP-binding domain (NBD) is responsible for energy generation. This Bartonella bacilliformis protein is Beta-(1--&gt;2)glucan export ATP-binding/permease protein NdvA.